The following is a 95-amino-acid chain: Aspartyl/glutamyl-tRNA(Asn/Gln) amidotransferase subunit C (95 aa).

The protein belongs to the GatC family. In terms of assembly, heterotrimer of A, B and C subunits.

The catalysed reaction is L-glutamyl-tRNA(Gln) + L-glutamine + ATP + H2O = L-glutaminyl-tRNA(Gln) + L-glutamate + ADP + phosphate + H(+). The enzyme catalyses L-aspartyl-tRNA(Asn) + L-glutamine + ATP + H2O = L-asparaginyl-tRNA(Asn) + L-glutamate + ADP + phosphate + 2 H(+). Allows the formation of correctly charged Asn-tRNA(Asn) or Gln-tRNA(Gln) through the transamidation of misacylated Asp-tRNA(Asn) or Glu-tRNA(Gln) in organisms which lack either or both of asparaginyl-tRNA or glutaminyl-tRNA synthetases. The reaction takes place in the presence of glutamine and ATP through an activated phospho-Asp-tRNA(Asn) or phospho-Glu-tRNA(Gln). The protein is Aspartyl/glutamyl-tRNA(Asn/Gln) amidotransferase subunit C of Ectopseudomonas mendocina (strain ymp) (Pseudomonas mendocina).